A 76-amino-acid chain; its full sequence is MIYKVFYQETKDQSPRRESTKALYLNIDATDELDGRIKARRLVEDNTYYNVEFIELLSDKHLDYEKETGVFELTEF.

Belongs to the RNA polymerase subunit epsilon family. As to quaternary structure, RNAP is composed of a core of 2 alpha, a beta and a beta' subunit. The core is associated with a delta subunit, and at least one of epsilon or omega. When a sigma factor is associated with the core the holoenzyme is formed, which can initiate transcription.

The catalysed reaction is RNA(n) + a ribonucleoside 5'-triphosphate = RNA(n+1) + diphosphate. Functionally, a non-essential component of RNA polymerase (RNAP). In Streptococcus pyogenes serotype M1, this protein is DNA-directed RNA polymerase subunit epsilon.